Reading from the N-terminus, the 413-residue chain is Protein esc1 (413 aa).

The segment covering 1-22 (MSSYALPSMQPTPTSSIPLRQM) has biased composition (polar residues). Disordered regions lie at residues 1–202 (MSSY…NQPS) and 230–265 (MYVPQQQTSHSSGASYQNESANPPVQSPMQYSYSQG). Low complexity predominate over residues 23-42 (SQPTTSAPSNSASSTPYSPQ). A compositionally biased stretch (polar residues) spans 43–63 (QVPLTHNSYPLSTPSSFQHGQ). 2 stretches are compositionally biased toward low complexity: residues 86–103 (SAAPASSSPTSATLSTAA) and 116–126 (SSSSYVYSVPP). The segment covering 127–136 (TNSTTSQASA) has biased composition (polar residues). A compositionally biased stretch (low complexity) spans 150–197 (STTLTPSTTDSSSTDVSSSDSVSTSASSSNASNTVSVTSPASSSATPL). A bHLH domain is found at 334-385 (ELRTSHKLAERKRRKEIKELFDDLKDALPLDKSTKSSKWGLLTRAIQYIEQL).

As to quaternary structure, efficient DNA binding requires dimerization with another bHLH protein.

It localises to the nucleus. Involved in the sexual differentiation process. Modulate the ability of the cell to differentiate in response to the nitrogen starvation signal; in particular in response to decreases in the level of cellular cAMP. This chain is Protein esc1 (esc1), found in Schizosaccharomyces pombe (strain 972 / ATCC 24843) (Fission yeast).